The primary structure comprises 207 residues: Cilia- and flagella-associated protein 418 (207 aa).

The required for interaction with FAM161A stretch occupies residues 1 to 75; the sequence is MAEDLDELLD…LINEILEEPN (75 aa). Residues 26-52 are disordered; it reads MVEQPKGCGGGTHSSDRNQAKAKETLR. Residues 39 to 52 are compositionally biased toward basic and acidic residues; the sequence is SSDRNQAKAKETLR.

In terms of assembly, interacts (via N-terminus) with FAM161A (via central region); the interaction is direct. As to expression, widely expressed, with highest levels in heart and brain. Also expressed in the retina (at protein level).

The protein resides in the cytoplasm. Its subcellular location is the photoreceptor inner segment. Its function is as follows. May be involved in photoreceptor outer segment disk morphogenesis. The protein is Cilia- and flagella-associated protein 418 of Homo sapiens (Human).